Reading from the N-terminus, the 326-residue chain is Vitamin B12 import system permease protein BtuC (326 aa).

9 helical membrane-spanning segments follow: residues 15 to 35, 61 to 81, 88 to 108, 112 to 132, 146 to 166, 184 to 204, 240 to 260, 274 to 294, and 302 to 322; these read WLLC…CAGE, LAVL…QALF, PGLL…VLLG, LPNW…TLIL, LLAG…AIYF, GGVD…LLWI, GWMV…GLVI, VLLP…DVVA, and ELPI…WLLL.

The protein belongs to the binding-protein-dependent transport system permease family. FecCD subfamily. As to quaternary structure, the complex is composed of two ATP-binding proteins (BtuD), two transmembrane proteins (BtuC) and a solute-binding protein (BtuF).

The protein resides in the cell inner membrane. Its function is as follows. Part of the ABC transporter complex BtuCDF involved in vitamin B12 import. Involved in the translocation of the substrate across the membrane. This chain is Vitamin B12 import system permease protein BtuC, found in Escherichia coli O17:K52:H18 (strain UMN026 / ExPEC).